An 878-amino-acid chain; its full sequence is Aminopeptidase M1-C (878 aa).

Residues 102–209 (LGEGVLAMDF…MSTYLVAIVV (108 aa)) are required for membrane association. Substrate contacts are provided by residues E142 and 275 to 279 (GAMEN). H311 is a binding site for Zn(2+). The Proton acceptor role is filled by E312. Zn(2+) contacts are provided by H315 and E334. The Dileucine internalization motif signature appears at 726-727 (LL).

This sequence belongs to the peptidase M1 family. In terms of assembly, homodimer. Requires Zn(2+) as cofactor.

The protein localises to the membrane. Its subcellular location is the microsome membrane. It localises to the cytoplasm. It carries out the reaction Release of an N-terminal amino acid, Xaa-|-Yaa- from a peptide, amide or arylamide. Xaa is preferably Ala, but may be most amino acids including Pro (slow action). When a terminal hydrophobic residue is followed by a prolyl residue, the two may be released as an intact Xaa-Pro dipeptide.. This Oryza sativa subsp. japonica (Rice) protein is Aminopeptidase M1-C.